The chain runs to 570 residues: Frizzled-2 (570 aa).

Residues 1 to 28 (MRARSALPRSALPRLLLPLLLLPAAGPA) form the signal peptide. Residues 29-252 (QFHGEKGISI…QEETRFARLW (224 aa)) are Extracellular-facing. The FZ domain maps to 39–158 (PDHGFCQPIS…HGAEQICVGQ (120 aa)). 5 disulfides stabilise this stretch: Cys44–Cys105, Cys52–Cys98, Cys89–Cys126, Cys115–Cys155, and Cys119–Cys143. Residue Asn58 is glycosylated (N-linked (GlcNAc...) asparagine). An N-linked (GlcNAc...) asparagine glycan is attached at Asn159. The segment at 166–194 (PALLTTAPPSGLQPGAGGTPGGPGGGGSP) is disordered. Residues 179-193 (PGAGGTPGGPGGGGS) show a composition bias toward gly residues. The helical transmembrane segment at 253-273 (ILTWSVLCCASTFFTVTTYLV) threads the bilayer. At 274–284 (DMQRFRYPERP) the chain is on the cytoplasmic side. The helical transmembrane segment at 285–305 (IIFLSGCYTMVSVAYIAGFVL) threads the bilayer. The Extracellular segment spans residues 306-332 (QERVVCNERFSEDGYRTVVQGTKKEGC). A helical membrane pass occupies residues 333–353 (TILFMMLYFFSMASSIWWVIL). Over 354 to 375 (SLTWFLAAGMKWGHEAIEANSQ) the chain is Cytoplasmic. The helical transmembrane segment at 376–396 (YFHLAAWAVPAVKTITILAMG) threads the bilayer. Residues 397–419 (QIDGDLLSGVCFVGLNSLDPLRG) lie on the Extracellular side of the membrane. A helical membrane pass occupies residues 420-440 (FVLAPLFVYLFIGTSFLLAGF). Residues 441–466 (VSLFRIRTIMKHDGTKTEKLERLMVR) are Cytoplasmic-facing. A helical membrane pass occupies residues 467–487 (IGVFSVLYTVPATIVIACYFY). The Extracellular portion of the chain corresponds to 488-524 (EQAFREHWERSWVSQHCKSLAIPCPAHYTPRMSPDFT). Residues 525–545 (VYMIKYLMTLIVGITSGFWIW) form a helical membrane-spanning segment. The Cytoplasmic portion of the chain corresponds to 546–570 (SGKTLHSWRKFYTRLTNSRHGETTV). The Lys-Thr-X-X-X-Trp motif, mediates interaction with the PDZ domain of Dvl family members signature appears at 548–553 (KTLHSW). Positions 568 to 570 (TTV) match the PDZ-binding motif.

This sequence belongs to the G-protein coupled receptor Fz/Smo family. Post-translationally, ubiquitinated by ZNRF3, leading to its degradation by the proteasome. Expressed in embryonic and adult heart, lung, chondrocytes and brain. Also expressed in the developing gastrointestinal tract (strongest in foregut), much weaker expression in the adult. No expression in fetal liver and adult spleen. Up-regulated in esophageal squamous cell carcinomas.

The protein resides in the membrane. It localises to the cell membrane. Its function is as follows. Receptor for Wnt proteins. Most of frizzled receptors are coupled to the beta-catenin canonical signaling pathway, which leads to the activation of disheveled proteins, inhibition of GSK-3 kinase, nuclear accumulation of beta-catenin and activation of Wnt target genes. A second signaling pathway involving PKC and calcium fluxes has been seen for some family members, but it is not yet clear if it represents a distinct pathway or if it can be integrated in the canonical pathway, as PKC seems to be required for Wnt-mediated inactivation of GSK-3 kinase. Both pathways seem to involve interactions with G-proteins. May be involved in transduction and intercellular transmission of polarity information during tissue morphogenesis and/or in differentiated tissues. The polypeptide is Frizzled-2 (Fzd2) (Mus musculus (Mouse)).